A 192-amino-acid polypeptide reads, in one-letter code: Large ribosomal subunit protein bL9 (192 aa).

Residues 173 to 192 are disordered; it reads ALRPEDFFDPEADGLDENEA. Over residues 179-192 the composition is skewed to acidic residues; the sequence is FFDPEADGLDENEA.

The protein belongs to the bacterial ribosomal protein bL9 family.

Binds to the 23S rRNA. This is Large ribosomal subunit protein bL9 from Rhizobium etli (strain ATCC 51251 / DSM 11541 / JCM 21823 / NBRC 15573 / CFN 42).